A 427-amino-acid chain; its full sequence is MDKHEKQKIKKICVIGLGYIGLPTASMLANHGYEVIGVDISEKRVNEIKNGDFKIEEPGLLTLLKGAINSKNLNVKTKAEKADAFIICVPTPAIGCDDGSKKCDLSYVLDAVNSILPYIDEGNLIVIESTIPPETTQKIYDIIDKKVYVAHCPERVLPGKILKELVENDRIIGGINKKSAEMAKEIYKSFVEGKIYITDSNTAEMVKLMENTYRDINIALANEFAKICDEIGVNVWDAIKIANKHPRVNILNPGPGVGGHCISIDPWFIVEKTNNAKFIRSARELNDKMPYYVCNMIISELKNLNIEKPKVTVFGATYKGNVEDTRESPSKKVIDALAEKNIPVSTYDPHANSFEYELHSLEDSIVNSDCIVVLTDHNEFKSFKKEEIDEISKKLKNKLIIDTKNILNHNLWKKAGFKIKLLGNGAW.

Residues Tyr-19, Ile-20, Asp-39, Arg-44, Thr-91, and Thr-130 each contribute to the NAD(+) site. Residues Arg-155, Val-156, Lys-207, Asn-211, Arg-214, His-245, Arg-247, and Gly-258 each coordinate UDP-N-acetyl-alpha-D-mannosaminouronate. Lys-207 acts as the Proton donor/acceptor in catalysis. The active-site Nucleophile is the Cys-261. Tyr-318 and Lys-319 together coordinate UDP-N-acetyl-alpha-D-mannosaminouronate. Arg-326 is an NAD(+) binding site. Residue Lys-404 participates in UDP-N-acetyl-alpha-D-mannosaminouronate binding.

Belongs to the UDP-glucose/GDP-mannose dehydrogenase family. In terms of assembly, homotetramer; probably dimer of dimers.

The enzyme catalyses UDP-N-acetyl-alpha-D-mannosamine + 2 NAD(+) + H2O = UDP-N-acetyl-alpha-D-mannosaminouronate + 2 NADH + 3 H(+). Catalyzes the four-electron oxidation of UDP-N-acetyl-D-mannosamine (UDP-ManNAc), reducing NAD(+) and releasing UDP-N-acetylmannosaminuronic acid (UDP-ManNAcA). The sequence is that of UDP-N-acetyl-D-mannosamine dehydrogenase (wecC) from Methanococcus vannielii (strain ATCC 35089 / DSM 1224 / JCM 13029 / OCM 148 / SB).